The primary structure comprises 168 residues: S-ribosylhomocysteine lyase (168 aa).

Residues H54, H58, and C128 each contribute to the Fe cation site.

Belongs to the LuxS family. Homodimer. The cofactor is Fe cation.

It carries out the reaction S-(5-deoxy-D-ribos-5-yl)-L-homocysteine = (S)-4,5-dihydroxypentane-2,3-dione + L-homocysteine. Functionally, involved in the synthesis of autoinducer 2 (AI-2) which is secreted by bacteria and is used to communicate both the cell density and the metabolic potential of the environment. The regulation of gene expression in response to changes in cell density is called quorum sensing. Catalyzes the transformation of S-ribosylhomocysteine (RHC) to homocysteine (HC) and 4,5-dihydroxy-2,3-pentadione (DPD). This is S-ribosylhomocysteine lyase from Mannheimia succiniciproducens (strain KCTC 0769BP / MBEL55E).